Reading from the N-terminus, the 46-residue chain is Putative antitoxin VapB3 (46 aa).

This sequence belongs to the UPF0165 family.

In terms of biological role, possibly the antitoxin component of a type II toxin-antitoxin (TA) system. Its cognate toxin is VapC3 (Potential). This is Putative antitoxin VapB3 (vapB3) from Pyrococcus furiosus (strain ATCC 43587 / DSM 3638 / JCM 8422 / Vc1).